The sequence spans 322 residues: MTKQNEKIINSSVKMLTISEDESGQRIDNYLLAKLKGVPKSLIYRIVRKGEVRVNKGRIKPEYKLQTGDVVRIPPVRVAEKNDAPISKNLNKVAALENQILFEDDCLIILNKPSGIAVHGGSGLNFGVIEALRALRPEARFLELVHRLDRDTSGILLIAKKRSALRNLHEQLRVKTVQKDYLALVRGQWQSHIKVIQASLLKNELSSGERIVRVSEQGKPSETRFSIEERYINATLVKASPVTGRTHQIRVHTQYAGHPIALDDKYGDKDFDKQMNELGLNRLFLHAFSIRFEHPKNGETLRFNASLDHQMKAILQKLRESK.

The S4 RNA-binding domain occupies 25-82 (QRIDNYLLAKLKGVPKSLIYRIVRKGEVRVNKGRIKPEYKLQTGDVVRIPPVRVAEKN). The active site involves Asp-149.

It belongs to the pseudouridine synthase RluA family.

The enzyme catalyses uridine(955/2504/2580) in 23S rRNA = pseudouridine(955/2504/2580) in 23S rRNA. Functionally, responsible for synthesis of pseudouridine from uracil at positions 955, 2504 and 2580 in 23S ribosomal RNA. This is Ribosomal large subunit pseudouridine synthase C (rluC) from Haemophilus influenzae (strain ATCC 51907 / DSM 11121 / KW20 / Rd).